We begin with the raw amino-acid sequence, 467 residues long: Cysteine--tRNA ligase (467 aa).

Residue Cys29 coordinates Zn(2+). The 'HIGH' region signature appears at 31–41 (ATVQGEPHIGH). Zn(2+) is bound by residues Cys207, His232, and Glu236. Residues 263 to 267 (KMSKS) carry the 'KMSKS' region motif. Lys266 contacts ATP. Positions 446–467 (IDVTDTPNGPEWSLRTARGKAN) are disordered.

The protein belongs to the class-I aminoacyl-tRNA synthetase family. Monomer. Zn(2+) is required as a cofactor.

The protein resides in the cytoplasm. The catalysed reaction is tRNA(Cys) + L-cysteine + ATP = L-cysteinyl-tRNA(Cys) + AMP + diphosphate. The sequence is that of Cysteine--tRNA ligase from Nocardia farcinica (strain IFM 10152).